The following is a 194-amino-acid chain: Crossover junction endodeoxyribonuclease RuvC (194 aa).

Residues D8, E72, and D144 contribute to the active site. D8, E72, and D144 together coordinate Mg(2+).

The protein belongs to the RuvC family. In terms of assembly, homodimer which binds Holliday junction (HJ) DNA. The HJ becomes 2-fold symmetrical on binding to RuvC with unstacked arms; it has a different conformation from HJ DNA in complex with RuvA. In the full resolvosome a probable DNA-RuvA(4)-RuvB(12)-RuvC(2) complex forms which resolves the HJ. Mg(2+) is required as a cofactor.

It is found in the cytoplasm. The catalysed reaction is Endonucleolytic cleavage at a junction such as a reciprocal single-stranded crossover between two homologous DNA duplexes (Holliday junction).. In terms of biological role, the RuvA-RuvB-RuvC complex processes Holliday junction (HJ) DNA during genetic recombination and DNA repair. Endonuclease that resolves HJ intermediates. Cleaves cruciform DNA by making single-stranded nicks across the HJ at symmetrical positions within the homologous arms, yielding a 5'-phosphate and a 3'-hydroxyl group; requires a central core of homology in the junction. The consensus cleavage sequence is 5'-(A/T)TT(C/G)-3'. Cleavage occurs on the 3'-side of the TT dinucleotide at the point of strand exchange. HJ branch migration catalyzed by RuvA-RuvB allows RuvC to scan DNA until it finds its consensus sequence, where it cleaves and resolves the cruciform DNA. This is Crossover junction endodeoxyribonuclease RuvC from Psychrobacter cryohalolentis (strain ATCC BAA-1226 / DSM 17306 / VKM B-2378 / K5).